Here is a 437-residue protein sequence, read N- to C-terminus: Bifunctional protein GlmU (437 aa).

The segment at 1-223 (MHNTAVILAA…WDECRGVNSR (223 aa)) is pyrophosphorylase. Residues 8-11 (LAAG), Lys-22, Gln-70, 75-76 (GT), 96-98 (YGD), Gly-135, Glu-149, Asn-164, and Asn-221 contribute to the UDP-N-acetyl-alpha-D-glucosamine site. Asp-98 provides a ligand contact to Mg(2+). Asn-221 is a Mg(2+) binding site. Residues 224–244 (AELAAAEAAMQSRLRAAALAA) form a linker region. Residues 245 to 437 (GVTMTAPETV…AELRMTKGKR (193 aa)) are N-acetyltransferase. Positions 310 and 328 each coordinate UDP-N-acetyl-alpha-D-glucosamine. His-340 acts as the Proton acceptor in catalysis. The UDP-N-acetyl-alpha-D-glucosamine site is built by Tyr-343 and Asn-354. Residues Ala-357, 363–364 (NY), Ser-382, Ala-400, and Arg-417 each bind acetyl-CoA.

It in the N-terminal section; belongs to the N-acetylglucosamine-1-phosphate uridyltransferase family. This sequence in the C-terminal section; belongs to the transferase hexapeptide repeat family. As to quaternary structure, homotrimer. Mg(2+) is required as a cofactor.

The protein resides in the cytoplasm. The enzyme catalyses alpha-D-glucosamine 1-phosphate + acetyl-CoA = N-acetyl-alpha-D-glucosamine 1-phosphate + CoA + H(+). It catalyses the reaction N-acetyl-alpha-D-glucosamine 1-phosphate + UTP + H(+) = UDP-N-acetyl-alpha-D-glucosamine + diphosphate. It functions in the pathway nucleotide-sugar biosynthesis; UDP-N-acetyl-alpha-D-glucosamine biosynthesis; N-acetyl-alpha-D-glucosamine 1-phosphate from alpha-D-glucosamine 6-phosphate (route II): step 2/2. The protein operates within nucleotide-sugar biosynthesis; UDP-N-acetyl-alpha-D-glucosamine biosynthesis; UDP-N-acetyl-alpha-D-glucosamine from N-acetyl-alpha-D-glucosamine 1-phosphate: step 1/1. Its pathway is bacterial outer membrane biogenesis; LPS lipid A biosynthesis. Its function is as follows. Catalyzes the last two sequential reactions in the de novo biosynthetic pathway for UDP-N-acetylglucosamine (UDP-GlcNAc). The C-terminal domain catalyzes the transfer of acetyl group from acetyl coenzyme A to glucosamine-1-phosphate (GlcN-1-P) to produce N-acetylglucosamine-1-phosphate (GlcNAc-1-P), which is converted into UDP-GlcNAc by the transfer of uridine 5-monophosphate (from uridine 5-triphosphate), a reaction catalyzed by the N-terminal domain. This is Bifunctional protein GlmU from Acidiphilium cryptum (strain JF-5).